The following is a 923-amino-acid chain: Isoleucine--tRNA ligase (923 aa).

Positions 57–67 (PYANGHIHIGH) match the 'HIGH' region motif. Residue E560 participates in L-isoleucyl-5'-AMP binding. The 'KMSKS' region motif lies at 601-605 (KMSKS). K604 provides a ligand contact to ATP. The Zn(2+) site is built by C895, C898, C915, and C918.

The protein belongs to the class-I aminoacyl-tRNA synthetase family. IleS type 1 subfamily. In terms of assembly, monomer. It depends on Zn(2+) as a cofactor.

It is found in the cytoplasm. The catalysed reaction is tRNA(Ile) + L-isoleucine + ATP = L-isoleucyl-tRNA(Ile) + AMP + diphosphate. Catalyzes the attachment of isoleucine to tRNA(Ile). As IleRS can inadvertently accommodate and process structurally similar amino acids such as valine, to avoid such errors it has two additional distinct tRNA(Ile)-dependent editing activities. One activity is designated as 'pretransfer' editing and involves the hydrolysis of activated Val-AMP. The other activity is designated 'posttransfer' editing and involves deacylation of mischarged Val-tRNA(Ile). This is Isoleucine--tRNA ligase from Geobacter sulfurreducens (strain ATCC 51573 / DSM 12127 / PCA).